Here is a 370-residue protein sequence, read N- to C-terminus: D-alanine--D-alanine ligase (370 aa).

An ATP-grasp domain is found at Lys-144 to Asp-352. Glu-177–Glu-232 is a binding site for ATP. Positions 306, 319, and 321 each coordinate Mg(2+).

Belongs to the D-alanine--D-alanine ligase family. Mg(2+) is required as a cofactor. The cofactor is Mn(2+).

The protein localises to the cytoplasm. The catalysed reaction is 2 D-alanine + ATP = D-alanyl-D-alanine + ADP + phosphate + H(+). It participates in cell wall biogenesis; peptidoglycan biosynthesis. Cell wall formation. The protein is D-alanine--D-alanine ligase of Listeria monocytogenes serovar 1/2a (strain ATCC BAA-679 / EGD-e).